Reading from the N-terminus, the 263-residue chain is Small ribosomal subunit protein eS1 (263 aa).

The span at 236–254 shows a compositional bias: basic and acidic residues; that stretch reads GDGKGGSDEPGARVDRPEG. Residues 236-263 are disordered; sequence GDGKGGSDEPGARVDRPEGYEPPVQETV.

Belongs to the eukaryotic ribosomal protein eS1 family. In terms of assembly, component of the small ribosomal subunit. Mature ribosomes consist of a small (40S) and a large (60S) subunit. The 40S subunit contains about 33 different proteins and 1 molecule of RNA (18S). The 60S subunit contains about 49 different proteins and 3 molecules of RNA (28S, 5.8S and 5S).

Its subcellular location is the cytoplasm. The sequence is that of Small ribosomal subunit protein eS1 from Periplaneta americana (American cockroach).